Consider the following 387-residue polypeptide: tRNA-specific 2-thiouridylase MnmA (387 aa).

ATP is bound by residues 6–13 and Leu-32; that span reads AMSGGVDS. The active-site Nucleophile is the Cys-101. Cys-101 and Cys-199 form a disulfide bridge. ATP is bound at residue Gly-125. The segment at 148–150 is interaction with tRNA; the sequence is KDQ. Residue Cys-199 is the Cysteine persulfide intermediate of the active site.

It belongs to the MnmA/TRMU family.

It is found in the cytoplasm. The enzyme catalyses S-sulfanyl-L-cysteinyl-[protein] + uridine(34) in tRNA + AH2 + ATP = 2-thiouridine(34) in tRNA + L-cysteinyl-[protein] + A + AMP + diphosphate + H(+). Its function is as follows. Catalyzes the 2-thiolation of uridine at the wobble position (U34) of tRNA, leading to the formation of s(2)U34. This chain is tRNA-specific 2-thiouridylase MnmA, found in Clavibacter michiganensis subsp. michiganensis (strain NCPPB 382).